The sequence spans 83 residues: Acyl carrier protein (83 aa).

A Carrier domain is found at 2–77 (NEILSKIKSI…DANQYIKKYL (76 aa)). An O-(pantetheine 4'-phosphoryl)serine modification is found at serine 37.

It belongs to the acyl carrier protein (ACP) family. 4'-phosphopantetheine is transferred from CoA to a specific serine of apo-ACP by AcpS. This modification is essential for activity because fatty acids are bound in thioester linkage to the sulfhydryl of the prosthetic group.

Its subcellular location is the cytoplasm. It participates in lipid metabolism; fatty acid biosynthesis. Its function is as follows. Carrier of the growing fatty acid chain in fatty acid biosynthesis. The chain is Acyl carrier protein from Karelsulcia muelleri (strain GWSS) (Sulcia muelleri).